A 396-amino-acid polypeptide reads, in one-letter code: MGFLKTCVFRRNACTAVCFWRSQVVQKPSVRKISTTSPRSTVMPAWVIDKYGSNEVLRFTQNMMIPMIHYPNEVIIKVHAASINPIDVNMRSGYGATALNMKRDPLHVKIKGEEFPLTLGRDVSGVVMECGLDVRYFKPGDEVWAAVPPWKQGTLSEFVVVSGNEVSHKPRSLTHTQAASLPYVALTAWSAINKVGGLNDRNCTGKRVLILGASGGVGTFAIQVMKAWDAHVTAVCSQDASELVRKLGADDVIDYKSGNVEAQLKSSKPFDFILDNVGGSTETWALKFLKKWSGATYVTLVTPFLLNMDRLGIADGMLQTGVTVGSKTLKHFWQGVHYRWAFFMASGPCLDDIAELVEAGKIQPVIEKTFPFSKVPEAFLKVERGHARGKTVINVV.

The transit peptide at 1 to 40 (MGFLKTCVFRRNACTAVCFWRSQVVQKPSVRKISTTSPRS) directs the protein to the mitochondrion. The 342-residue stretch at 52-393 (GSNEVLRFTQ…RGHARGKTVI (342 aa)) folds into the Enoyl reductase (ER) domain. Serine 214, glycine 216, valine 217, serine 237, tyrosine 255, asparagine 276, leucine 300, alanine 341, phenylalanine 343, histidine 386, alanine 387, and arginine 388 together coordinate NADPH.

This sequence belongs to the zinc-containing alcohol dehydrogenase family. Quinone oxidoreductase subfamily. Interacts with RTN4, UQCRC1 and UQCRC2.

It localises to the mitochondrion matrix. Its subcellular location is the mitochondrion outer membrane. The catalysed reaction is a 3-demethylubiquinone + NADH + 2 H(+) = a 3-demethylubiquinol + NAD(+). The enzyme catalyses a 3-demethylubiquinone + NADPH + 2 H(+) = a 3-demethylubiquinol + NADP(+). It carries out the reaction 3-demethylubiquinone-10 + NADH + 2 H(+) = 3-demethylubiquinol-10 + NAD(+). It catalyses the reaction 3-demethylubiquinone-10 + NADPH + 2 H(+) = 3-demethylubiquinol-10 + NADP(+). It participates in cofactor biosynthesis; ubiquinone biosynthesis. NAD(P)H oxidoreductase involved in the ubiquinone biosynthetic pathway. Required for the O-methyltransferase activity of COQ3. Able to catalyze the oxidoreduction of 3-demethylubiquinone into 3-demethylubiquinol in vitro. However, it is unclear if 3-demethylubiquinone constitutes a substrate in vivo. May also play a role in the regulation of retinal ganglion cell (RGC) neurite outgrowth, and hence in the development of the inner retina and optic nerve. Appears to be a potent inhibitor of regeneration following spinal cord injury. The protein is NAD(P)H oxidoreductase RTN4IP1, mitochondrial (RTN4IP1) of Bos taurus (Bovine).